The chain runs to 400 residues: Snake venom metalloproteinase H1 (400 aa).

The first 6 residues, 1-6 (FPYQGS), serve as a signal peptide directing secretion. The propeptide occupies 7–176 (SIILESGNVN…KKASQLIVST (170 aa)). The Peptidase M12B domain maps to 180 to 377 (RYMEIVIVVD…ENPPCILNKP (198 aa)). Positions 183 and 267 each coordinate Ca(2+). 3 cysteine pairs are disulfide-bonded: C291/C372, C331/C356, and C333/C339. Position 316 (H316) interacts with Zn(2+). E317 is an active-site residue. Residues H320 and H326 each coordinate Zn(2+). The Ca(2+) site is built by C372, N375, V387, N390, L392, E394, and D400. Residues 378-400 (LRTDTVSTPVSGNELLEAGKDYD) constitute a propeptide that is removed on maturation.

It belongs to the venom metalloproteinase (M12B) family. P-I subfamily. In terms of assembly, monomer. Zn(2+) is required as a cofactor. In terms of tissue distribution, expressed by the venom gland.

The protein resides in the secreted. Snake venom metalloproteinase that impairs hemostasis in the envenomed animal. In Deinagkistrodon acutus (Hundred-pace snake), this protein is Snake venom metalloproteinase H1.